Consider the following 303-residue polypeptide: Probable 5-dehydro-4-deoxyglucarate dehydratase (303 aa).

This sequence belongs to the DapA family.

It catalyses the reaction 5-dehydro-4-deoxy-D-glucarate + H(+) = 2,5-dioxopentanoate + CO2 + H2O. It participates in carbohydrate acid metabolism; D-glucarate degradation; 2,5-dioxopentanoate from D-glucarate: step 2/2. The protein is Probable 5-dehydro-4-deoxyglucarate dehydratase of Paracidovorax citrulli (strain AAC00-1) (Acidovorax citrulli).